The primary structure comprises 124 residues: Putative outer membrane protein CT_569 (124 aa).

A signal peptide spans 1–31 (MKKTKKRKQSITLVEMMVVITLIGIIGGALA).

The protein localises to the cell outer membrane. The polypeptide is Putative outer membrane protein CT_569 (Chlamydia trachomatis serovar D (strain ATCC VR-885 / DSM 19411 / UW-3/Cx)).